The sequence spans 208 residues: Holliday junction branch migration complex subunit RuvA (208 aa).

The tract at residues 1-63 (MIGMLTGRVE…QDAITLHGFL (63 aa)) is domain I. Residues 64–142 (DRDAKKTFLQ…LSQIEGASAQ (79 aa)) are domain II. The tract at residues 143 to 151 (AATSKSPVD) is flexible linker. Positions 151–208 (DTGTEQVVEGLISLGWRQQDAQQAVAEACAENDIPTPLATDDVPRVLRLALALMDRGR) are domain III.

Belongs to the RuvA family. Homotetramer. Forms an RuvA(8)-RuvB(12)-Holliday junction (HJ) complex. HJ DNA is sandwiched between 2 RuvA tetramers; dsDNA enters through RuvA and exits via RuvB. An RuvB hexamer assembles on each DNA strand where it exits the tetramer. Each RuvB hexamer is contacted by two RuvA subunits (via domain III) on 2 adjacent RuvB subunits; this complex drives branch migration. In the full resolvosome a probable DNA-RuvA(4)-RuvB(12)-RuvC(2) complex forms which resolves the HJ.

The protein resides in the cytoplasm. Functionally, the RuvA-RuvB-RuvC complex processes Holliday junction (HJ) DNA during genetic recombination and DNA repair, while the RuvA-RuvB complex plays an important role in the rescue of blocked DNA replication forks via replication fork reversal (RFR). RuvA specifically binds to HJ cruciform DNA, conferring on it an open structure. The RuvB hexamer acts as an ATP-dependent pump, pulling dsDNA into and through the RuvAB complex. HJ branch migration allows RuvC to scan DNA until it finds its consensus sequence, where it cleaves and resolves the cruciform DNA. The sequence is that of Holliday junction branch migration complex subunit RuvA from Bifidobacterium longum (strain DJO10A).